Here is a 293-residue protein sequence, read N- to C-terminus: Acidic endochitinase SE2 (293 aa).

Residues 1-25 (MAAKIVSVLFLISLLIFASFESSHG) form the signal peptide. Positions 26–293 (SQIVIYWGQN…GYSSAIKSSV (268 aa)) constitute a GH18 domain. Cystine bridges form between C45-C91 and C75-C81. E151 (proton donor) is an active-site residue. A disulfide bridge links C183 with C212.

It belongs to the glycosyl hydrolase 18 family. Chitinase class II subfamily. In terms of tissue distribution, accumulates in leaves during infection.

Its subcellular location is the secreted. It localises to the extracellular space. The catalysed reaction is Random endo-hydrolysis of N-acetyl-beta-D-glucosaminide (1-&gt;4)-beta-linkages in chitin and chitodextrins.. Functionally, this protein functions as a defense against chitin containing fungal pathogens. This endochitinase also exhibits exochitinase activity, i.e. it is capable of hydrolyzing chito-oligosaccharides, including chitobiose. In Beta vulgaris (Sugar beet), this protein is Acidic endochitinase SE2 (SE2).